The sequence spans 265 residues: Acetylglutamate kinase (265 aa).

Residues 41–42, arginine 63, and asparagine 156 contribute to the substrate site; that span reads GG.

The protein belongs to the acetylglutamate kinase family. ArgB subfamily.

The protein resides in the cytoplasm. The catalysed reaction is N-acetyl-L-glutamate + ATP = N-acetyl-L-glutamyl 5-phosphate + ADP. It functions in the pathway amino-acid biosynthesis; L-arginine biosynthesis; N(2)-acetyl-L-ornithine from L-glutamate: step 2/4. Its function is as follows. Catalyzes the ATP-dependent phosphorylation of N-acetyl-L-glutamate. The chain is Acetylglutamate kinase from Oceanobacillus iheyensis (strain DSM 14371 / CIP 107618 / JCM 11309 / KCTC 3954 / HTE831).